Reading from the N-terminus, the 180-residue chain is MSLFTLFALAVALGTDAFSLCIGIGIAGVNRRQIALISLTVLIFHILMPLLGWYAGGFLGSKMGQAASIAGALLLLYLGGKMIWDTIKPGKDEGPRFVITNTGGLLLLSASVSMDALSVGFTLGTQQVSLVLAAGVIGLVAGMMTFAGLTLGKYVGDWIGERAELVGGIILVGIGVKLFF.

Helical transmembrane passes span 6 to 26 (LFAL…GIGI), 34 to 54 (IALI…LGWY), 67 to 87 (ASIA…WDTI), 103 to 123 (GGLL…GFTL), 130 to 150 (LVLA…AGLT), and 159 to 179 (IGER…VKLF).

The protein belongs to the MntP (TC 9.B.29) family.

Its subcellular location is the cell membrane. Its function is as follows. Probably functions as a manganese efflux pump. This Desulforamulus reducens (strain ATCC BAA-1160 / DSM 100696 / MI-1) (Desulfotomaculum reducens) protein is Putative manganese efflux pump MntP.